Reading from the N-terminus, the 85-residue chain is Cytochrome c6 (85 aa).

Residues cysteine 14, cysteine 17, histidine 18, and methionine 58 each coordinate heme c.

Belongs to the cytochrome c family. PetJ subfamily. Monomer. Binds 1 heme c group covalently per subunit.

The protein localises to the cellular thylakoid lumen. In terms of biological role, functions as an electron carrier between membrane-bound cytochrome b6-f and photosystem I in oxygenic photosynthesis. The chain is Cytochrome c6 (petJ) from Leptolyngbya boryana (Plectonema boryanum).